A 274-amino-acid chain; its full sequence is Prolyl 4-hydroxylase 13 (274 aa).

The Cytoplasmic portion of the chain corresponds to 1–10 (MRSYGKEKKL). Residues 11 to 31 (VFPYVFIACCFFLAIFGFCFF) traverse the membrane as a helical; Signal-anchor for type II membrane protein segment. Residues 32–274 (NLFSQGISFS…TKWIRDQTYD (243 aa)) are Lumenal-facing. The Fe2OG dioxygenase domain occupies 151–270 (YYESFNILRY…KWVATKWIRD (120 aa)). His169 and Asp171 together coordinate Fe cation. Residue Asn242 is glycosylated (N-linked (GlcNAc...) asparagine). Fe cation is bound at residue His251. Lys261 is a 2-oxoglutarate binding site.

Belongs to the P4HA family. Requires Fe(2+) as cofactor. The cofactor is L-ascorbate. As to expression, expressed in epidermal root hair cells (trichoblasts) root hairless cells (atrichoblasts).

Its subcellular location is the endoplasmic reticulum membrane. It catalyses the reaction L-prolyl-[collagen] + 2-oxoglutarate + O2 = trans-4-hydroxy-L-prolyl-[collagen] + succinate + CO2. Functionally, catalyzes the post-translational formation of 4-hydroxyproline in -Xaa-Pro-Gly- sequences in proline-rich peptide sequences of plant glycoproteins and other proteins. Hydroxyprolines are important constituent of many plant cell wall glycoproteins such as extensins, hydroxyproline-rich glycoproteins, lectins and arabinogalactan proteins. Possesses high affinity for leucine-rich repeat and proline-rich extensins of root cell walls that are essential for root hair development. Hydroxyprolines define the subsequent O-glycosylation sites by arabinosyltransferases which elongate the O-arabinosides on extensins. This Arabidopsis thaliana (Mouse-ear cress) protein is Prolyl 4-hydroxylase 13.